A 454-amino-acid chain; its full sequence is tRNA modification GTPase MnmE (454 aa).

(6S)-5-formyl-5,6,7,8-tetrahydrofolate is bound by residues Arg23, Glu80, and Lys120. Residues Gly216–Gly377 enclose the TrmE-type G domain. Residue Asn226 coordinates K(+). Residues Asn226–Ser231, Thr245–Thr251, Asp270–Gly273, Asn335–Asp338, and Ser358–Arg360 contribute to the GTP site. Residue Ser230 coordinates Mg(2+). Residues Thr245, Ile247, and Thr250 each coordinate K(+). Residue Thr251 participates in Mg(2+) binding. Lys454 lines the (6S)-5-formyl-5,6,7,8-tetrahydrofolate pocket.

This sequence belongs to the TRAFAC class TrmE-Era-EngA-EngB-Septin-like GTPase superfamily. TrmE GTPase family. In terms of assembly, homodimer. Heterotetramer of two MnmE and two MnmG subunits. K(+) serves as cofactor.

It is found in the cytoplasm. Functionally, exhibits a very high intrinsic GTPase hydrolysis rate. Involved in the addition of a carboxymethylaminomethyl (cmnm) group at the wobble position (U34) of certain tRNAs, forming tRNA-cmnm(5)s(2)U34. The chain is tRNA modification GTPase MnmE from Salmonella typhimurium (strain LT2 / SGSC1412 / ATCC 700720).